Reading from the N-terminus, the 378-residue chain is Odorant receptor Or2 (378 aa).

A topological domain (cytoplasmic) is located at residue Met1. Residues 2-22 form a helical membrane-spanning segment; sequence LIEECPIIGVNVRVWLFWSYL. Residues 23–29 lie on the Extracellular side of the membrane; that stretch reads RRPRLSR. The helical transmembrane segment at 30–50 threads the bilayer; that stretch reads FLVGCIPVAVLNVFQFLKLYS. Over 51–59 the chain is Cytoplasmic; it reads SWGDMSELI. The chain crosses the membrane as a helical span at residues 60 to 80; it reads INGYFTVLYFNLVLRTSFLVI. Residues 81–120 are Extracellular-facing; the sequence is NRRKFETFFEGVAAEYALLEKNDDIRPVLERYTRRGRMLS. The chain crosses the membrane as a helical span at residues 121 to 141; sequence ISNLWLGAFISACFVTYPLFV. Topologically, residues 142-164 are cytoplasmic; that stretch reads PGRGLPYGVTIPGVDVLATPTYQ. The chain crosses the membrane as a helical span at residues 165–185; sequence VVFVLQVYLTFPACCMYIPFT. The Extracellular portion of the chain corresponds to 186 to 254; the sequence is SFYATCTLFA…HDLNSLVTHL (69 aa). A helical membrane pass occupies residues 255-275; it reads CLLEFLSFGMMLCALLFLLSI. Residues 276-278 lie on the Cytoplasmic side of the membrane; that stretch reads SNQ. A helical transmembrane segment spans residues 279-299; the sequence is LAQMIMIGSYIFMILSQMFAF. The Extracellular segment spans residues 300 to 378; it reads YWHANEVLEQ…YFTLLRRVYN (79 aa). N-linked (GlcNAc...) asparagine glycosylation is present at Asn364.

The protein belongs to the insect chemoreceptor superfamily. Heteromeric odorant receptor channel (TC 1.A.69) family. Or30a subfamily. As to expression, expressed in male and female antennae and maxillary palps.

The protein resides in the cell membrane. In terms of biological role, odorant receptor which plays a critical role in the anthropophilic host-seeking behavior; establishes the host preference to transmit malaria. This Anopheles gambiae (African malaria mosquito) protein is Odorant receptor Or2 (OR2).